The following is a 232-amino-acid chain: ATP synthase subunit a (232 aa).

Transmembrane regions (helical) follow at residues 18–38, 74–94, 107–127, 142–162, 173–193, and 195–215; these read LLFIPMNLFSIVFALSWIAFI, WAGLITTVFIVILSANVLGLF, TYSLGFPIWMAVNILGFYLAF, ALIPLMVWIETLSLFAQPIAL, GHLLIFLLSTAIWLLSSSLMV, and SIPIFVIFVLLFILEIGVACI.

Belongs to the ATPase A chain family. F-type ATPases have 2 components, CF(1) - the catalytic core - and CF(0) - the membrane proton channel. CF(1) has five subunits: alpha(3), beta(3), gamma(1), delta(1), epsilon(1). CF(0) has three main subunits: a, b and c.

The protein resides in the mitochondrion inner membrane. Its function is as follows. Mitochondrial membrane ATP synthase (F(1)F(0) ATP synthase or Complex V) produces ATP from ADP in the presence of a proton gradient across the membrane which is generated by electron transport complexes of the respiratory chain. F-type ATPases consist of two structural domains, F(1) - containing the extramembraneous catalytic core and F(0) - containing the membrane proton channel, linked together by a central stalk and a peripheral stalk. During catalysis, ATP synthesis in the catalytic domain of F(1) is coupled via a rotary mechanism of the central stalk subunits to proton translocation. Key component of the proton channel; it may play a direct role in the translocation of protons across the membrane. This Paracentrotus lividus (Common sea urchin) protein is ATP synthase subunit a (ATP6).